Consider the following 379-residue polypeptide: Inactive deoxyhypusine synthase (379 aa).

The segment at 1–48 (MLASVPAPRPAKKDSAASRRKSASKSTGAAVKDGSSARVSASGAAESP) is disordered. Positions 36–47 (SARVSASGAAES) are enriched in low complexity. Residues 115 to 119 (SNMIS), 141 to 143 (SAG), Glu147, and Asp256 each bind NAD(+). Position 146–147 (146–147 (EE)) interacts with spermidine. Asp261 is a binding site for spermidine. Gly302 is an NAD(+) binding site. His307 lines the spermidine pocket. An NAD(+)-binding site is contributed by 323–324 (TG). Spermidine is bound by residues 329 to 331 (GCV) and 338 to 344 (DDVACGL). Residue 357 to 358 (DA) participates in NAD(+) binding.

Belongs to the deoxyhypusine synthase family.

The polypeptide is Inactive deoxyhypusine synthase (Leishmania donovani).